The sequence spans 219 residues: Ribose-5-phosphate isomerase A (219 aa).

Substrate is bound by residues 28 to 31, 81 to 84, and 94 to 97; these read TGST, DGAD, and KGGG. Glu103 serves as the catalytic Proton acceptor. Lys121 is a substrate binding site.

It belongs to the ribose 5-phosphate isomerase family. In terms of assembly, homodimer.

It carries out the reaction aldehydo-D-ribose 5-phosphate = D-ribulose 5-phosphate. It participates in carbohydrate degradation; pentose phosphate pathway; D-ribose 5-phosphate from D-ribulose 5-phosphate (non-oxidative stage): step 1/1. In terms of biological role, catalyzes the reversible conversion of ribose-5-phosphate to ribulose 5-phosphate. This is Ribose-5-phosphate isomerase A from Acidithiobacillus ferrooxidans (strain ATCC 23270 / DSM 14882 / CIP 104768 / NCIMB 8455) (Ferrobacillus ferrooxidans (strain ATCC 23270)).